An 80-amino-acid polypeptide reads, in one-letter code: MDFEGQKLAEYIYQYTIIIFGVIGWIIGFIKQDFSITFYSVALGTFLSLILCLPNWKIYCQHPLSWQKPIVQSTPTDKSK.

The Cytoplasmic segment spans residues 1–9; the sequence is MDFEGQKLA. A helical membrane pass occupies residues 10–30; that stretch reads EYIYQYTIIIFGVIGWIIGFI. The Lumenal segment spans residues 31-33; that stretch reads KQD. The chain crosses the membrane as a helical span at residues 34–54; it reads FSITFYSVALGTFLSLILCLP. Residues 55–80 are Cytoplasmic-facing; sequence NWKIYCQHPLSWQKPIVQSTPTDKSK.

Belongs to the SPCS1 family. In terms of assembly, component of the signal peptidase complex (SPC) composed of a catalytic subunit sec11 and three accessory subunits spcs1, spcs2 and spcs3. The complex induces a local thinning of the ER membrane which is used to measure the length of the signal peptide (SP) h-region of protein substrates. This ensures the selectivity of the complex towards h-regions shorter than 18-20 amino acids.

It is found in the endoplasmic reticulum membrane. Component of the signal peptidase complex (SPC) which catalyzes the cleavage of N-terminal signal sequences from nascent proteins as they are translocated into the lumen of the endoplasmic reticulum. Dispensable for SPC enzymatic activity. The chain is Signal peptidase complex subunit 1 (spcs1) from Dictyostelium discoideum (Social amoeba).